We begin with the raw amino-acid sequence, 569 residues long: Proline--tRNA ligase (569 aa).

It belongs to the class-II aminoacyl-tRNA synthetase family. ProS type 1 subfamily. As to quaternary structure, homodimer.

The protein resides in the cytoplasm. It catalyses the reaction tRNA(Pro) + L-proline + ATP = L-prolyl-tRNA(Pro) + AMP + diphosphate. Catalyzes the attachment of proline to tRNA(Pro) in a two-step reaction: proline is first activated by ATP to form Pro-AMP and then transferred to the acceptor end of tRNA(Pro). As ProRS can inadvertently accommodate and process non-cognate amino acids such as alanine and cysteine, to avoid such errors it has two additional distinct editing activities against alanine. One activity is designated as 'pretransfer' editing and involves the tRNA(Pro)-independent hydrolysis of activated Ala-AMP. The other activity is designated 'posttransfer' editing and involves deacylation of mischarged Ala-tRNA(Pro). The misacylated Cys-tRNA(Pro) is not edited by ProRS. The polypeptide is Proline--tRNA ligase (Campylobacter jejuni subsp. doylei (strain ATCC BAA-1458 / RM4099 / 269.97)).